The sequence spans 24 residues: Conotoxin PIVF (24 aa).

Cystine bridges form between cysteine 2-cysteine 10, cysteine 3-cysteine 15, and cysteine 13-cysteine 19. Position 24 is a lysine amide (lysine 24).

It belongs to the conotoxin A superfamily. Expressed by the venom duct.

Its subcellular location is the secreted. Functionally, probable neurotoxin with ion channel inhibitor activity. In vivo, elicits dose-dependently excitatory activity upon injection into fish. Its action is slowly reversible. In Conus purpurascens (Purple cone), this protein is Conotoxin PIVF.